Here is a 456-residue protein sequence, read N- to C-terminus: Dothistromin biosynthesis regulatory protein aflJ (456 aa).

The region spanning 74-143 (LARENQLLAC…PKPGYVAHSG (70 aa)) is the HTH iclR-type domain. Positions 104-123 (YSDVADLACVPVDQLRRIAR) form a DNA-binding region, H-T-H motif. Polar residues predominate over residues 290-300 (KLHNGLSTPPE). Residues 290-314 (KLHNGLSTPPESDTGPAARAAKASE) are disordered.

Its subcellular location is the nucleus. In terms of biological role, transcription coactivator involved in regulation of the dothistromin biosynthesis gene cluster with aflR. The chain is Dothistromin biosynthesis regulatory protein aflJ from Dothistroma septosporum (strain NZE10 / CBS 128990) (Red band needle blight fungus).